A 100-amino-acid polypeptide reads, in one-letter code: Large ribosomal subunit protein bL28 (100 aa).

Belongs to the bacterial ribosomal protein bL28 family.

The polypeptide is Large ribosomal subunit protein bL28 (Ehrlichia ruminantium (strain Gardel)).